Consider the following 430-residue polypeptide: Histidine--tRNA ligase, chloroplastic (430 aa).

This sequence belongs to the class-II aminoacyl-tRNA synthetase family.

It is found in the plastid. The protein localises to the chloroplast. The enzyme catalyses tRNA(His) + L-histidine + ATP = L-histidyl-tRNA(His) + AMP + diphosphate + H(+). The polypeptide is Histidine--tRNA ligase, chloroplastic (Pyropia yezoensis (Susabi-nori)).